Consider the following 276-residue polypeptide: Undecaprenyl-diphosphatase (276 aa).

Transmembrane regions (helical) follow at residues 1–21, 39–59, 84–104, 115–135, 188–208, 222–242, and 253–273; these read MSWLQVVVLSVLQGLTEFLPV, AGASFTAVSQLGTEVAVLVYF, YWLGWWVIIGTIPISVVGLLF, LWLVATAMIVFSFVIAAAEYY, FGFLLAIPAVFASGLFSLPDA, QLFVSIVIAFVVGYAAVAWFL, and FVGYRIVLGTVVLVLLSAGVV.

The protein belongs to the UppP family.

The protein resides in the cell membrane. The catalysed reaction is di-trans,octa-cis-undecaprenyl diphosphate + H2O = di-trans,octa-cis-undecaprenyl phosphate + phosphate + H(+). Catalyzes the dephosphorylation of undecaprenyl diphosphate (UPP). Confers resistance to bacitracin. This Mycolicibacterium vanbaalenii (strain DSM 7251 / JCM 13017 / BCRC 16820 / KCTC 9966 / NRRL B-24157 / PYR-1) (Mycobacterium vanbaalenii) protein is Undecaprenyl-diphosphatase.